We begin with the raw amino-acid sequence, 312 residues long: Olfactory receptor 4F15 (312 aa).

The Extracellular portion of the chain corresponds to 1 to 25 (MNGMNHSVVSEFVFMGLTNSREIQL). N5 carries N-linked (GlcNAc...) asparagine glycosylation. Residues 26–49 (LLFVFSLLFYFASMMGNLVIVFTV) form a helical membrane-spanning segment. Residues 50-57 (TMDAHLHS) are Cytoplasmic-facing. Residues 58–79 (PMYFLLANLSIIDMAFCSITAP) traverse the membrane as a helical segment. At 80-100 (KMICDIFKKHKAISFRGCITQ) the chain is on the extracellular side. A disulfide bridge connects residues C97 and C189. Residues 101–120 (IFFSHALGGTEMVLLIAMAF) traverse the membrane as a helical segment. The Cytoplasmic portion of the chain corresponds to 121-139 (DRYMAICKPLHYLTIMSPR). A helical membrane pass occupies residues 140–158 (MCLYFLATSSIIGLIHSLV). Topologically, residues 159–195 (QLVFVVDLPFCGPNIFDSFYCDLPRLLRLACTNTQEL) are extracellular. Residues 196–219 (EFMVTVNSGLISVGSFVLLVISYI) traverse the membrane as a helical segment. Residues 220-235 (FILFTVWKHSSGGLAK) are Cytoplasmic-facing. Residues 236-258 (ALSTLSAHVTVVILFFGPLMFFY) traverse the membrane as a helical segment. Residues 259 to 269 (TWPSPTSHLDK) are Extracellular-facing. The chain crosses the membrane as a helical span at residues 270–289 (YLAIFDAFITPFLNPVIYTF). The Cytoplasmic segment spans residues 290-312 (RNKDMKVAMRRLCSRLAHFTKIL).

This sequence belongs to the G-protein coupled receptor 1 family.

It localises to the cell membrane. Odorant receptor. The protein is Olfactory receptor 4F15 (OR4F15) of Homo sapiens (Human).